Reading from the N-terminus, the 866-residue chain is Protein SEY1 (866 aa).

Over 1–746 (MVSNGHFAYA…KRSAIGGMTQ (746 aa)) the chain is Cytoplasmic. The region spanning 48–305 (GFNYHLISVF…IPADGFAVYA (258 aa)) is the GB1/RHD3-type G domain. A GTP-binding site is contributed by 58–65 (GSQSTGKS). Residues 480 to 506 (SNYTQELALYQKDLEKISAQLRKDEMR) adopt a coiled-coil conformation. The chain crosses the membrane as a helical span at residues 747–767 (IPVYFYILLLALGWNEIIAVL). The Lumenal portion of the chain corresponds to 768-770 (RNP). Residues 771–791 (VYFFMLFLCSVAAYIIYQLNL) form a helical membrane-spanning segment. The Cytoplasmic portion of the chain corresponds to 792-866 (WGPMVKMAEA…DDEVEGEETW (75 aa)). Positions 840-866 (SHVRSGRNATKINERDDDDEVEGEETW) are disordered. Over residues 854–866 (RDDDDEVEGEETW) the composition is skewed to acidic residues.

It belongs to the TRAFAC class dynamin-like GTPase superfamily. GB1/RHD3 GTPase family. RHD3 subfamily.

It is found in the endoplasmic reticulum membrane. Cooperates with the reticulon proteins and tubule-shaping DP1 family proteins to generate and maintain the structure of the tubular endoplasmic reticulum network. Has GTPase activity, which is required for its function in ER organization. This Coccidioides immitis (strain RS) (Valley fever fungus) protein is Protein SEY1.